Consider the following 1444-residue polypeptide: Probable chitinase LysM18 (1444 aa).

LysM domains lie at S256–C302 and T321–L369. The region spanning N382–T450 is the Chitin-binding type-1 domain. Disulfide bonds link C385–C413, C407–C419, C412–C426, and C444–C448. Residues Y461 to D831 form the GH18 domain. The active-site Proton donor is E582. Chitin is bound by residues Y583 and W808.

This sequence belongs to the glycosyl hydrolase 18 family. Chitinase class V subfamily.

The catalysed reaction is Random endo-hydrolysis of N-acetyl-beta-D-glucosaminide (1-&gt;4)-beta-linkages in chitin and chitodextrins.. Probable chitinase involved in the degradation of chitin, a component of the cell walls of fungi and exoskeletal elements of some animals (including worms and arthropods). Might be involved in manipulation of host defenses for successful infection. In Penicillium expansum (Blue mold rot fungus), this protein is Probable chitinase LysM18.